The sequence spans 231 residues: Cytochrome c oxidase subunit 2 (231 aa).

Residues 1–30 (MNNFFQGYNLLFQHSLFASYMDWFHSFNCS) are Mitochondrial intermembrane-facing. The helical transmembrane segment at 31-52 (LLLGVLVFVTLLFGYLIFGTFY) threads the bilayer. At 53-69 (FKSKKIEYQFGELLCSI) the chain is on the mitochondrial matrix side. A helical transmembrane segment spans residues 70–89 (FPTIILLMQMVPSLSLLYYY). At 90–231 (GLMNLDSNLT…FKSWCFGTME (142 aa)) the chain is on the mitochondrial intermembrane side. Residues histidine 164, cysteine 199, glutamate 201, cysteine 203, histidine 207, and methionine 210 each contribute to the Cu cation site. Glutamate 201 serves as a coordination point for Mg(2+).

This sequence belongs to the cytochrome c oxidase subunit 2 family. In terms of assembly, component of the cytochrome c oxidase (complex IV, CIV), a multisubunit enzyme composed of a catalytic core of 3 subunits and several supernumerary subunits. The complex exists as a monomer or a dimer and forms supercomplexes (SCs) in the inner mitochondrial membrane with ubiquinol-cytochrome c oxidoreductase (cytochrome b-c1 complex, complex III, CIII). Cu cation serves as cofactor.

It localises to the mitochondrion inner membrane. It carries out the reaction 4 Fe(II)-[cytochrome c] + O2 + 8 H(+)(in) = 4 Fe(III)-[cytochrome c] + 2 H2O + 4 H(+)(out). In terms of biological role, component of the cytochrome c oxidase, the last enzyme in the mitochondrial electron transport chain which drives oxidative phosphorylation. The respiratory chain contains 3 multisubunit complexes succinate dehydrogenase (complex II, CII), ubiquinol-cytochrome c oxidoreductase (cytochrome b-c1 complex, complex III, CIII) and cytochrome c oxidase (complex IV, CIV), that cooperate to transfer electrons derived from NADH and succinate to molecular oxygen, creating an electrochemical gradient over the inner membrane that drives transmembrane transport and the ATP synthase. Cytochrome c oxidase is the component of the respiratory chain that catalyzes the reduction of oxygen to water. Electrons originating from reduced cytochrome c in the intermembrane space (IMS) are transferred via the dinuclear copper A center (CU(A)) of subunit 2 and heme A of subunit 1 to the active site in subunit 1, a binuclear center (BNC) formed by heme A3 and copper B (CU(B)). The BNC reduces molecular oxygen to 2 water molecules using 4 electrons from cytochrome c in the IMS and 4 protons from the mitochondrial matrix. The sequence is that of Cytochrome c oxidase subunit 2 from Caenorhabditis elegans.